The following is a 309-amino-acid chain: Cytochrome c biogenesis protein CcsA (309 aa).

8 helical membrane-spanning segments follow: residues 18-38 (LGIL…GAVF), 43-63 (FFIV…QLLF), 67-87 (ISGH…AWGI), 102-122 (IIPS…CFVL), 148-168 (VMLS…VLFI), 216-236 (SILI…VWAN), 250-267 (TWAF…HMRI), and 279-299 (LATS…FLGI).

This sequence belongs to the CcmF/CycK/Ccl1/NrfE/CcsA family. In terms of assembly, may interact with ccs1.

It localises to the cellular thylakoid membrane. Its function is as follows. Required during biogenesis of c-type cytochromes (cytochrome c6 and cytochrome f) at the step of heme attachment. This chain is Cytochrome c biogenesis protein CcsA, found in Prochlorococcus marinus (strain MIT 9312).